Consider the following 423-residue polypeptide: AUGMIN subunit 4 (423 aa).

The stretch at 267-287 forms a coiled coil; that stretch reads IEEIERDEAALREDLYSADRK.

This sequence belongs to the HAUS4 family. As to quaternary structure, part of the augmin complex composed of 8 subunits. The complex acts on microtubules and interacts with gamma-tubulin in spindles and the phragmoplast.

The protein localises to the cytoplasm. It localises to the cytoskeleton. Its subcellular location is the spindle. It is found in the phragmoplast. In terms of biological role, involved in microtubules reorganization during spindle and phragmoplast development. In Arabidopsis thaliana (Mouse-ear cress), this protein is AUGMIN subunit 4 (AUG4).